Consider the following 254-residue polypeptide: Tabinhibitin 6 (254 aa).

The first 22 residues, 1–22 (MLPYWCPLLLAALVLQYATIDA), serve as a signal peptide directing secretion. The Cell attachment site signature appears at 31–33 (RGD). Residues 66–210 (LSKINDVRDH…KARALLTCNF (145 aa)) form the SCP domain.

The protein belongs to the CRISP family. As to expression, expressed in salivary glands.

It localises to the secreted. Its function is as follows. Inhibits platelet aggregation induced by all agonists tested (ADP, arachidonic acid, the thromboxane A2 analog U46619, thrombin, and snake venom snaclecs (TMVA that activates platelet through GPIB, and stejnulxin that specifically acts through GPVI (GP6))). May act by competing with fibrinogen for binding to glycoprotein IIb/IIIa (ITGA2B/ITGB3). The polypeptide is Tabinhibitin 6 (Tabanus yao (Horsefly)).